The following is a 365-amino-acid chain: tRNA/tmRNA (uracil-C(5))-methyltransferase (365 aa).

The S-adenosyl-L-methionine site is built by Gln-189, Tyr-217, Asn-222, Glu-238, and Asp-298. Cys-323 serves as the catalytic Nucleophile. Glu-357 serves as the catalytic Proton acceptor.

Belongs to the class I-like SAM-binding methyltransferase superfamily. RNA M5U methyltransferase family. TrmA subfamily.

It carries out the reaction uridine(54) in tRNA + S-adenosyl-L-methionine = 5-methyluridine(54) in tRNA + S-adenosyl-L-homocysteine + H(+). The enzyme catalyses uridine(341) in tmRNA + S-adenosyl-L-methionine = 5-methyluridine(341) in tmRNA + S-adenosyl-L-homocysteine + H(+). In terms of biological role, dual-specificity methyltransferase that catalyzes the formation of 5-methyluridine at position 54 (m5U54) in all tRNAs, and that of position 341 (m5U341) in tmRNA (transfer-mRNA). The polypeptide is tRNA/tmRNA (uracil-C(5))-methyltransferase (Shewanella frigidimarina (strain NCIMB 400)).